The sequence spans 285 residues: Tropomyosin alpha-3 chain (285 aa).

The stretch at 1 to 285 (MMEAIKKKMQ…DHALNDMTSI (285 aa)) forms a coiled coil. Met2 is subject to N-acetylmethionine. At Met2 the chain carries N-acetylalanine. Over residues 16 to 41 (KENALDRAEQAEAEQKQAEERSKQLE) the composition is skewed to basic and acidic residues. Residues 16-44 (KENALDRAEQAEAEQKQAEERSKQLEDEL) are disordered. At Thr54 the chain carries Phosphothreonine. Phosphoserine is present on residues Ser62 and Ser88. At Thr109 the chain carries Phosphothreonine. An N6-acetyllysine mark is found at Glu125 and Leu177. The residue at position 207 (Ser207) is a Phosphoserine. Tyr215 bears the N6-acetyllysine mark. Residue Ser216 is modified to Phosphoserine. At Thr253 the chain carries Phosphothreonine. A Phosphotyrosine modification is found at Tyr262. At Ser272 the chain carries Phosphoserine. Thr283 carries the post-translational modification Phosphothreonine. Ser284 is modified (phosphoserine).

Belongs to the tropomyosin family. As to quaternary structure, homodimer. Heterodimer of an alpha (TPM1, TPM3 or TPM4) and a beta (TPM2) chain. Interacts with TMOD1. Interacts with TNNT1.

It localises to the cytoplasm. The protein resides in the cytoskeleton. Binds to actin filaments in muscle and non-muscle cells. Plays a central role, in association with the troponin complex, in the calcium dependent regulation of vertebrate striated muscle contraction. Smooth muscle contraction is regulated by interaction with caldesmon. In non-muscle cells is implicated in stabilizing cytoskeleton actin filaments. The sequence is that of Tropomyosin alpha-3 chain (TPM3) from Homo sapiens (Human).